Reading from the N-terminus, the 232-residue chain is Large ribosomal subunit protein uL1 (232 aa).

It belongs to the universal ribosomal protein uL1 family. As to quaternary structure, part of the 50S ribosomal subunit.

Its function is as follows. Binds directly to 23S rRNA. The L1 stalk is quite mobile in the ribosome, and is involved in E site tRNA release. In terms of biological role, protein L1 is also a translational repressor protein, it controls the translation of the L11 operon by binding to its mRNA. This is Large ribosomal subunit protein uL1 from Chlamydia trachomatis serovar D (strain ATCC VR-885 / DSM 19411 / UW-3/Cx).